The chain runs to 148 residues: Large ribosomal subunit protein bL9 (148 aa).

Belongs to the bacterial ribosomal protein bL9 family.

Functionally, binds to the 23S rRNA. The polypeptide is Large ribosomal subunit protein bL9 (Listeria monocytogenes serotype 4a (strain HCC23)).